We begin with the raw amino-acid sequence, 763 residues long: Phosphoglycerol transferase I (763 aa).

Transmembrane regions (helical) follow at residues 1–21 (MSELLSVALFLASVLIYAWKA), 26–46 (WWFAATLTVLGLFVILNITLY), 77–97 (ILPGIGIALALVAVFGALGWV), and 108–128 (VGYSLLALLLALGSVDASPAF).

This sequence belongs to the OpgB family.

Its subcellular location is the cell inner membrane. The catalysed reaction is a phosphatidylglycerol + a membrane-derived-oligosaccharide D-glucose = a 1,2-diacyl-sn-glycerol + a membrane-derived-oligosaccharide 6-(glycerophospho)-D-glucose.. The protein operates within glycan metabolism; osmoregulated periplasmic glucan (OPG) biosynthesis. In terms of biological role, transfers a phosphoglycerol residue from phosphatidylglycerol to the membrane-bound nascent glucan backbones. In Salmonella dublin (strain CT_02021853), this protein is Phosphoglycerol transferase I.